The sequence spans 294 residues: Glyceraldehyde-3-phosphate dehydrogenase (294 aa).

The NAD(+) site is built by Asp-19, Arg-63, and Thr-105. Residues 134 to 136 and Thr-165 each bind D-glyceraldehyde 3-phosphate; that span reads SCT. The Nucleophile role is filled by Cys-135. Lys-177 carries the N6-acetyllysine modification. D-glyceraldehyde 3-phosphate contacts are provided by residues 194-195 and Arg-217; that span reads TG. Lys-234 is subject to N6-acetyllysine.

Belongs to the glyceraldehyde-3-phosphate dehydrogenase family. Homotetramer.

The protein resides in the cytoplasm. It carries out the reaction D-glyceraldehyde 3-phosphate + phosphate + NAD(+) = (2R)-3-phospho-glyceroyl phosphate + NADH + H(+). Its pathway is carbohydrate degradation; glycolysis; pyruvate from D-glyceraldehyde 3-phosphate: step 1/5. In terms of biological role, catalyzes the oxidative phosphorylation of glyceraldehyde 3-phosphate (G3P) to 1,3-bisphosphoglycerate (BPG) using the cofactor NAD. The first reaction step involves the formation of a hemiacetal intermediate between G3P and a cysteine residue, and this hemiacetal intermediate is then oxidized to a thioester, with concomitant reduction of NAD to NADH. The reduced NADH is then exchanged with the second NAD, and the thioester is attacked by a nucleophilic inorganic phosphate to produce BPG. The chain is Glyceraldehyde-3-phosphate dehydrogenase (gap) from Pseudescherichia vulneris (Escherichia vulneris).